Reading from the N-terminus, the 316-residue chain is Ribose-phosphate pyrophosphokinase (316 aa).

ATP is bound by residues 37–39 and 96–97; these read DGE and RQ. Mg(2+) contacts are provided by H131 and D171. K195 is an active-site residue. D-ribose 5-phosphate-binding positions include R197, D221, and 225 to 229; that span reads DTGGT.

The protein belongs to the ribose-phosphate pyrophosphokinase family. Class I subfamily. Homohexamer. Mg(2+) is required as a cofactor.

Its subcellular location is the cytoplasm. It carries out the reaction D-ribose 5-phosphate + ATP = 5-phospho-alpha-D-ribose 1-diphosphate + AMP + H(+). It participates in metabolic intermediate biosynthesis; 5-phospho-alpha-D-ribose 1-diphosphate biosynthesis; 5-phospho-alpha-D-ribose 1-diphosphate from D-ribose 5-phosphate (route I): step 1/1. Functionally, involved in the biosynthesis of the central metabolite phospho-alpha-D-ribosyl-1-pyrophosphate (PRPP) via the transfer of pyrophosphoryl group from ATP to 1-hydroxyl of ribose-5-phosphate (Rib-5-P). The chain is Ribose-phosphate pyrophosphokinase from Haemophilus ducreyi (strain 35000HP / ATCC 700724).